Consider the following 458-residue polypeptide: ATP synthase subunit beta (458 aa).

148-155 provides a ligand contact to ATP; sequence GGAGVGKT.

The protein belongs to the ATPase alpha/beta chains family. In terms of assembly, F-type ATPases have 2 components, CF(1) - the catalytic core - and CF(0) - the membrane proton channel. CF(1) has five subunits: alpha(3), beta(3), gamma(1), delta(1), epsilon(1). CF(0) has three main subunits: a(1), b(2) and c(9-12). The alpha and beta chains form an alternating ring which encloses part of the gamma chain. CF(1) is attached to CF(0) by a central stalk formed by the gamma and epsilon chains, while a peripheral stalk is formed by the delta and b chains.

It is found in the cell inner membrane. It carries out the reaction ATP + H2O + 4 H(+)(in) = ADP + phosphate + 5 H(+)(out). Functionally, produces ATP from ADP in the presence of a proton gradient across the membrane. The catalytic sites are hosted primarily by the beta subunits. This chain is ATP synthase subunit beta, found in Shewanella loihica (strain ATCC BAA-1088 / PV-4).